Reading from the N-terminus, the 232-residue chain is uncharacterized protein (232 aa).

The signal sequence occupies residues 1–18 (MGILKSLFTLGKSFISQA). Residues 207-232 (AEAGIGGSNKSSAQDVLARLQRQQGE) are disordered.

This sequence belongs to the PspA/Vipp/IM30 family.

This is an uncharacterized protein from Escherichia coli O6:H1 (strain CFT073 / ATCC 700928 / UPEC).